Consider the following 428-residue polypeptide: Histidine--tRNA ligase (428 aa).

It belongs to the class-II aminoacyl-tRNA synthetase family. Homodimer.

The protein localises to the cytoplasm. The catalysed reaction is tRNA(His) + L-histidine + ATP = L-histidyl-tRNA(His) + AMP + diphosphate + H(+). The sequence is that of Histidine--tRNA ligase from Bordetella bronchiseptica (strain ATCC BAA-588 / NCTC 13252 / RB50) (Alcaligenes bronchisepticus).